Reading from the N-terminus, the 145-residue chain is uncharacterized protein (145 aa).

The helical transmembrane segment at 4-24 (IYMLVALLISSLVLFAGCVQN) threads the bilayer.

The protein resides in the membrane. This is an uncharacterized protein from Methanocaldococcus jannaschii (strain ATCC 43067 / DSM 2661 / JAL-1 / JCM 10045 / NBRC 100440) (Methanococcus jannaschii).